A 184-amino-acid polypeptide reads, in one-letter code: Ribosome-recycling factor (184 aa).

This sequence belongs to the RRF family.

It localises to the cytoplasm. Responsible for the release of ribosomes from messenger RNA at the termination of protein biosynthesis. May increase the efficiency of translation by recycling ribosomes from one round of translation to another. This Clostridium botulinum (strain Langeland / NCTC 10281 / Type F) protein is Ribosome-recycling factor.